The following is a 229-amino-acid chain: Predicted GPI-anchored protein 19 (229 aa).

The first 20 residues, 1–20 (MFSTTSIVLWFTILLPVTLP), serve as a signal peptide directing secretion. The interval 63 to 92 (DNEQVLRKSKKKKKTTSTGTPGNENTTDFA) is disordered. Over residues 81-92 (GTPGNENTTDFA) the composition is skewed to polar residues. N-linked (GlcNAc...) asparagine glycans are attached at residues N87, N184, and N189. G208 carries the GPI-anchor amidated glycine lipid modification. Positions 209-229 (FGSLIPYNSFYLYILLFCIIF) are cleaved as a propeptide — removed in mature form.

The protein localises to the cell membrane. Functionally, predicted GPI-anchored protein which may have a role during host infection. This chain is Predicted GPI-anchored protein 19 (PGA19), found in Candida albicans (strain SC5314 / ATCC MYA-2876) (Yeast).